We begin with the raw amino-acid sequence, 2214 residues long: Genome polyprotein (2214 aa).

Disordered stretches follow at residues 1–21 and 600–619; these read MGAQVSSQKVGAHENTNVATG and KPQKQLTAQSTPSTSGVNSQ. The N-myristoyl glycine; by host moiety is linked to residue glycine 2. The Cytoplasmic portion of the chain corresponds to 2-1525; that stretch reads GAQVSSQKVG…NLNRAMTILQ (1524 aa). Amphipathic alpha-helix stretches follow at residues 580 to 601 and 581 to 601; these read QGIEETIDTVISNALQLSQPKP and GIEETIDTVISNALQLSQPKP. A compositionally biased stretch (polar residues) spans 606–619; sequence TAQSTPSTSGVNSQ. Active-site for protease 2A activity residues include histidine 906 and aspartate 924. 2 residues coordinate Zn(2+): cysteine 941 and cysteine 943. Cysteine 995 serves as the catalytic For protease 2A activity. Zn(2+)-binding residues include cysteine 1001 and histidine 1003. The segment at 1133–1205 is membrane-binding; the sequence is GDSWLKKFTE…HQSCPSQEQQ (73 aa). The tract at residues 1133-1271 is oligomerization; it reads GDSWLKKFTE…SPGTGKSIAT (139 aa). The interval 1154-1158 is RNA-binding; that stretch reads SNKIS. The region spanning 1237–1393 is the SF3 helicase domain; the sequence is ENTINNYIQF…SEHSIKGKLN (157 aa). 1261–1268 provides a ligand contact to ATP; that stretch reads GSPGTGKS. Residues cysteine 1401, cysteine 1404, cysteine 1413, and cysteine 1418 each coordinate Zn(2+). The segment at 1401-1418 adopts a C4-type zinc-finger fold; it reads CKDCPQPANFKKCCPLVC. Positions 1445–1452 are RNA-binding; that stretch reads ERNRRANI. An oligomerization region spans residues 1456–1461; that stretch reads MEALFQ. The stretch at 1526-1541 is an intramembrane region; sequence AVTTFAAVAAVVYVMY. Residues 1542-2214 are Cytoplasmic-facing; that stretch reads KLFAGHQGAY…TLYRRWLDSF (673 aa). The residue at position 1551 (tyrosine 1551) is an O-(5'-phospho-RNA)-tyrosine. The 179-residue stretch at 1571-1749 folds into the Peptidase C3 domain; the sequence is GPGFDYAVAM…FAAALKRSYF (179 aa). Catalysis depends on for protease 3C activity residues histidine 1610, glutamate 1641, and cysteine 1717. The region spanning 1980-2095 is the RdRp catalytic domain; it reads EKLFAFDYTG…SYPHEVDASL (116 aa). Residues aspartate 1986 and aspartate 2081 each coordinate Mg(2+).

This sequence belongs to the picornaviruses polyprotein family. In terms of assembly, interacts with capsid protein VP1 and capsid protein VP3 to form heterotrimeric protomers. As to quaternary structure, interacts with capsid protein VP0, and capsid protein VP3 to form heterotrimeric protomers. Five protomers subsequently associate to form pentamers which serve as building blocks for the capsid. Interacts with capsid protein VP2, capsid protein VP3 and capsid protein VP4 following cleavage of capsid protein VP0. Interacts with capsid protein VP1 and capsid protein VP3 in the mature capsid. In terms of assembly, interacts with capsid protein VP0 and capsid protein VP1 to form heterotrimeric protomers. Five protomers subsequently associate to form pentamers which serve as building blocks for the capsid. Interacts with capsid protein VP4 in the mature capsid. Interacts with protein 2C; this interaction may be important for virion morphogenesis. As to quaternary structure, interacts with capsid protein VP1 and capsid protein VP3. Homodimer. In terms of assembly, homohexamer; forms a hexameric ring structure with 6-fold symmetry characteristic of AAA+ ATPases. Interacts (via N-terminus) with host RTN3 (via reticulon domain); this interaction is important for viral replication. Interacts with capsid protein VP3; this interaction may be important for virion morphogenesis. As to quaternary structure, interacts with protein 3CD. Homodimer. Interacts with host GBF1. Interacts (via GOLD domain) with host ACBD3 (via GOLD domain); this interaction allows the formation of a viral protein 3A/ACBD3 heterotetramer with a 2:2 stoichiometry, which will stimulate the recruitment of host PI4KB in order to synthesize PI4P at the viral RNA replication sites. In terms of assembly, interacts with RNA-directed RNA polymerase. As to quaternary structure, interacts with protein 3AB and with RNA-directed RNA polymerase. Interacts with Viral protein genome-linked and with protein 3CD. Requires Mg(2+) as cofactor. In terms of processing, specific enzymatic cleavages in vivo by the viral proteases yield processing intermediates and the mature proteins. Post-translationally, myristoylation is required for the formation of pentamers during virus assembly. Further assembly of 12 pentamers and a molecule of genomic RNA generates the provirion. During virion maturation, immature virions are rendered infectious following cleavage of VP0 into VP4 and VP2. This maturation seems to be an autocatalytic event triggered by the presence of RNA in the capsid and it is followed by a conformational change infectious virion. In terms of processing, myristoylation is required during RNA encapsidation and formation of the mature virus particle. Post-translationally, VPg is uridylylated by the polymerase into VPg-pUpU. This acts as a nucleotide-peptide primer for the genomic RNA replication.

The protein resides in the virion. The protein localises to the host cytoplasm. It localises to the host cytoplasmic vesicle membrane. It is found in the host nucleus. The catalysed reaction is a ribonucleoside 5'-triphosphate + H2O = a ribonucleoside 5'-diphosphate + phosphate + H(+). It carries out the reaction Selective cleavage of Tyr-|-Gly bond in the picornavirus polyprotein.. The enzyme catalyses RNA(n) + a ribonucleoside 5'-triphosphate = RNA(n+1) + diphosphate. It catalyses the reaction Selective cleavage of Gln-|-Gly bond in the poliovirus polyprotein. In other picornavirus reactions Glu may be substituted for Gln, and Ser or Thr for Gly.. With respect to regulation, replication or transcription is subject to high level of random mutations by the nucleotide analog ribavirin. Its function is as follows. Forms an icosahedral capsid of pseudo T=3 symmetry with capsid proteins VP2 and VP3. The capsid is 300 Angstroms in diameter, composed of 60 copies of each capsid protein and enclosing the viral positive strand RNA genome. Capsid protein VP1 mainly forms the vertices of the capsid. Capsid protein VP1 interacts with host cell receptor to provide virion attachment to target host cells. This attachment induces virion internalization. Tyrosine kinases are probably involved in the entry process. After binding to its receptor, the capsid undergoes conformational changes. Capsid protein VP1 N-terminus (that contains an amphipathic alpha-helix) and capsid protein VP4 are externalized. Together, they shape a pore in the host membrane through which viral genome is translocated to host cell cytoplasm. Functionally, forms an icosahedral capsid of pseudo T=3 symmetry with capsid proteins VP2 and VP3. The capsid is 300 Angstroms in diameter, composed of 60 copies of each capsid protein and enclosing the viral positive strand RNA genome. In terms of biological role, lies on the inner surface of the capsid shell. After binding to the host receptor, the capsid undergoes conformational changes. Capsid protein VP4 is released, Capsid protein VP1 N-terminus is externalized, and together, they shape a pore in the host membrane through which the viral genome is translocated into the host cell cytoplasm. Component of immature procapsids, which is cleaved into capsid proteins VP4 and VP2 after maturation. Allows the capsid to remain inactive before the maturation step. Its function is as follows. Cysteine protease that cleaves viral polyprotein and specific host proteins. It is responsible for the autocatalytic cleavage between the P1 and P2 regions, which is the first cleavage occurring in the polyprotein. Also cleaves the host translation initiation factor EIF4G1, in order to shut down the capped cellular mRNA translation. Inhibits the host nucleus-cytoplasm protein and RNA trafficking by cleaving host members of the nuclear pores. Counteracts stress granule formation probably by antagonizing its assembly or promoting its dissassembly. Cleaves and inhibits host IFIH1/MDA5, thereby inhibiting the type-I IFN production and the establishment of the antiviral state. Cleaves and inhibits host MAVS, thereby inhibiting the type-I IFN production and the establishment of the antiviral state. Functionally, plays an essential role in the virus replication cycle by acting as a viroporin. Creates a pore in the host endoplasmic reticulum and as a consequence releases Ca2+ in the cytoplasm of infected cell. In turn, high levels of cytoplasmic calcium may trigger membrane trafficking and transport of viral ER-associated proteins to viroplasms, sites of viral genome replication. In terms of biological role, induces and associates with structural rearrangements of intracellular membranes. Displays RNA-binding, nucleotide binding and NTPase activities. May play a role in virion morphogenesis and viral RNA encapsidation by interacting with the capsid protein VP3. Localizes the viral replication complex to the surface of membranous vesicles. Together with protein 3CD binds the Cis-Active RNA Element (CRE) which is involved in RNA synthesis initiation. Acts as a cofactor to stimulate the activity of 3D polymerase, maybe through a nucleid acid chaperone activity. Its function is as follows. Localizes the viral replication complex to the surface of membranous vesicles. It inhibits host cell endoplasmic reticulum-to-Golgi apparatus transport and causes the disassembly of the Golgi complex, possibly through GBF1 interaction. This would result in depletion of MHC, trail receptors and IFN receptors at the host cell surface. Plays an essential role in viral RNA replication by recruiting ACBD3 and PI4KB at the viral replication sites, thereby allowing the formation of the rearranged membranous structures where viral replication takes place. Functionally, acts as a primer for viral RNA replication and remains covalently bound to viral genomic RNA. VPg is uridylylated prior to priming replication into VPg-pUpU. The oriI viral genomic sequence may act as a template for this. The VPg-pUpU is then used as primer on the genomic RNA poly(A) by the RNA-dependent RNA polymerase to replicate the viral genome. During genome replication, the VPg-RNA linkage is removed by the host TDP2, thereby accelerating replication. During the late stage of the replication cycle, host TDP2 is excluded from sites of viral RNA synthesis and encapsidation, allowing for the generation of progeny virions. In terms of biological role, involved in the viral replication complex and viral polypeptide maturation. It exhibits protease activity with a specificity and catalytic efficiency that is different from protease 3C. Protein 3CD lacks polymerase activity. Protein 3CD binds to the 5'UTR of the viral genome. Replicates the viral genomic RNA on the surface of intracellular membranes. May form linear arrays of subunits that propagate along a strong head-to-tail interaction called interface-I. Covalently attaches UMP to a tyrosine of VPg, which is used to prime RNA synthesis. The positive stranded RNA genome is first replicated at virus induced membranous vesicles, creating a dsRNA genomic replication form. This dsRNA is then used as template to synthesize positive stranded RNA genomes. ss(+)RNA genomes are either translated, replicated or encapsidated. Its function is as follows. Major viral protease that mediates proteolytic processing of the polyprotein. Cleaves host EIF5B, contributing to host translation shutoff. Also cleaves host PABPC1, contributing to host translation shutoff. Cleaves host NLRP1, triggers host N-glycine-mediated degradation of the autoinhibitory NLRP1 N-terminal fragment. The sequence is that of Genome polyprotein from Coxsackievirus A24 (strain EH24/70).